The sequence spans 215 residues: Cytochrome c biogenesis ATP-binding export protein CcmA (215 aa).

The 209-residue stretch at 3-211 (LTAENLAARR…KMTGFAGVDR (209 aa)) folds into the ABC transporter domain. 35–42 (GRNGSGKS) provides a ligand contact to ATP.

This sequence belongs to the ABC transporter superfamily. CcmA exporter (TC 3.A.1.107) family. As to quaternary structure, the complex is composed of two ATP-binding proteins (CcmA) and two transmembrane proteins (CcmB).

The protein resides in the cell inner membrane. The catalysed reaction is heme b(in) + ATP + H2O = heme b(out) + ADP + phosphate + H(+). Its function is as follows. Part of the ABC transporter complex CcmAB involved in the biogenesis of c-type cytochromes; once thought to export heme, this seems not to be the case, but its exact role is uncertain. Responsible for energy coupling to the transport system. In Rhizobium etli (strain ATCC 51251 / DSM 11541 / JCM 21823 / NBRC 15573 / CFN 42), this protein is Cytochrome c biogenesis ATP-binding export protein CcmA.